Consider the following 313-residue polypeptide: Porphobilinogen deaminase (313 aa).

Cysteine 242 carries the S-(dipyrrolylmethanemethyl)cysteine modification.

This sequence belongs to the HMBS family. Monomer. Dipyrromethane serves as cofactor.

The enzyme catalyses 4 porphobilinogen + H2O = hydroxymethylbilane + 4 NH4(+). The protein operates within porphyrin-containing compound metabolism; protoporphyrin-IX biosynthesis; coproporphyrinogen-III from 5-aminolevulinate: step 2/4. Its function is as follows. Tetrapolymerization of the monopyrrole PBG into the hydroxymethylbilane pre-uroporphyrinogen in several discrete steps. The polypeptide is Porphobilinogen deaminase (Enterobacter sp. (strain 638)).